The sequence spans 56 residues: Frontoxin I (56 aa).

4 disulfides stabilise this stretch: C3–C22, C17–C39, C41–C52, and C53–C56.

Belongs to the three-finger toxin family. Short-chain subfamily. Type I alpha-neurotoxin sub-subfamily. In terms of tissue distribution, expressed by the venom gland.

It localises to the secreted. Functionally, binds to muscle nicotinic acetylcholine receptor (nAChR) and inhibit acetylcholine from binding to the receptor, thereby impairing neuromuscular transmission. The sequence is that of Frontoxin I from Micrurus frontalis (Coral snake).